A 256-amino-acid chain; its full sequence is DNA repair protein RecO (256 aa).

Belongs to the RecO family.

In terms of biological role, involved in DNA repair and RecF pathway recombination. This Rhizobium johnstonii (strain DSM 114642 / LMG 32736 / 3841) (Rhizobium leguminosarum bv. viciae) protein is DNA repair protein RecO.